The primary structure comprises 122 residues: Small ribosomal subunit protein uS13 (122 aa).

The disordered stretch occupies residues 95 to 122 (GLPVRGQRTHTNARTRKGKAKPIAGKKK).

Belongs to the universal ribosomal protein uS13 family. In terms of assembly, part of the 30S ribosomal subunit. Forms a loose heterodimer with protein S19. Forms two bridges to the 50S subunit in the 70S ribosome.

Its function is as follows. Located at the top of the head of the 30S subunit, it contacts several helices of the 16S rRNA. In the 70S ribosome it contacts the 23S rRNA (bridge B1a) and protein L5 of the 50S subunit (bridge B1b), connecting the 2 subunits; these bridges are implicated in subunit movement. Contacts the tRNAs in the A and P-sites. In Sphingopyxis alaskensis (strain DSM 13593 / LMG 18877 / RB2256) (Sphingomonas alaskensis), this protein is Small ribosomal subunit protein uS13.